The sequence spans 134 residues: Peroxisomal testis-specific protein 1 (134 aa).

The short motif at 131-134 (NHLL) is the Microbody targeting signal element.

Its subcellular location is the peroxisome. This is Peroxisomal testis-specific protein 1 (PXT1) from Homo sapiens (Human).